The primary structure comprises 1027 residues: INO80 complex subunit D (1027 aa).

K87 is covalently cross-linked (Glycyl lysine isopeptide (Lys-Gly) (interchain with G-Cter in SUMO2)). The residue at position 132 (S132) is a Phosphoserine. 5 disordered regions span residues 193–278, 519–574, 813–850, 914–969, and 982–1027; these read HFSP…VDPP, RGDN…LSMP, RQQYSSDHSHSSPHGSHYDSEHVPSPYSDHITSPHTTS, LSTS…TSPK, and QLSS…PSPN. Residues 201–216 are compositionally biased toward low complexity; that stretch reads SQQQPPQQHSHLSPLS. Polar residues predominate over residues 229–257; the sequence is VCKSPQPQNTSLPMQGVAPTTHTIAQARQ. Positions 525 to 559 are enriched in basic residues; the sequence is KVQHQQQRKPRKKTKPPALTKKHKKKRRRGPRRPQ. Residues 914-932 show a composition bias toward low complexity; it reads LSTSLSTPPTTSNSETTQP. The segment covering 937-954 has biased composition (polar residues); the sequence is VTPSSSSVLPGLPQTSFS. Residues 1001 to 1027 are compositionally biased toward low complexity; it reads APPTGFTVTGATATSTNNASSPFPSPN.

This sequence belongs to the INO80D family. As to quaternary structure, component of the chromatin remodeling INO80 complex; specifically part of a complex module associated with the N-terminus of INO80.

It localises to the nucleus. In terms of biological role, putative regulatory component of the chromatin remodeling INO80 complex which is involved in transcriptional regulation, DNA replication and probably DNA repair. The protein is INO80 complex subunit D of Homo sapiens (Human).